We begin with the raw amino-acid sequence, 255 residues long: 1-(5-phosphoribosyl)-5-[(5-phosphoribosylamino)methylideneamino] imidazole-4-carboxamide isomerase (255 aa).

Asp12 functions as the Proton acceptor in the catalytic mechanism. Catalysis depends on Asp131, which acts as the Proton donor.

Belongs to the HisA/HisF family.

It localises to the cytoplasm. It catalyses the reaction 1-(5-phospho-beta-D-ribosyl)-5-[(5-phospho-beta-D-ribosylamino)methylideneamino]imidazole-4-carboxamide = 5-[(5-phospho-1-deoxy-D-ribulos-1-ylimino)methylamino]-1-(5-phospho-beta-D-ribosyl)imidazole-4-carboxamide. Its pathway is amino-acid biosynthesis; L-histidine biosynthesis; L-histidine from 5-phospho-alpha-D-ribose 1-diphosphate: step 4/9. This chain is 1-(5-phosphoribosyl)-5-[(5-phosphoribosylamino)methylideneamino] imidazole-4-carboxamide isomerase, found in Cutibacterium acnes (strain DSM 16379 / KPA171202) (Propionibacterium acnes).